A 749-amino-acid chain; its full sequence is RNA-binding protein 5-B (749 aa).

The tract at residues 1-88 (MGSDKRVSRS…YHSDGDYMDH (88 aa)) is disordered. The region spanning 102–182 (KTIMLRGLPI…KTIAMHYSNP (81 aa)) is the RRM 1 domain. A RanBP2-type zinc finger spans residues 185–214 (KFEDWLCNKCGLYNFRRRLKCFRCGAAKAE). The RRM 2 domain maps to 241-325 (SAIILRNIGP…KTIGVDFAKS (85 aa)). Disordered stretches follow at residues 425 to 471 (QMYQ…SVPD), 520 to 558 (PAADGTGQSGAQPNGANPGTSKEGKEKKEKPKSKTAQQI), 570 to 595 (NKQKENFKNSFQPLSSRDEERKESAA), and 626 to 680 (TEEE…NSNI). The span at 429–460 (QPGSPTQSGTSTAASTTPASTTSTEEATTPTA) shows a compositional bias: low complexity. 2 stretches are compositionally biased toward basic and acidic residues: residues 585–594 (SRDEERKESA) and 627–648 (EEEKPPNAKYRDRAAERREKYG). In terms of domain architecture, G-patch spans 677-723 (NSNIGNKMLQAMGWKEGSGLGRKSQGITAPIQAQVRMRGAGLGAKGS).

The protein belongs to the RBM5/RBM10 family. Component of the spliceosome A complex (also known as the prespliceosome). Appears to dissociate from the spliceosome upon formation of the spliceosome B complex (also known as the precatalytic spliceosome), in which the heterotrimeric U4/U6.U5 snRNPs are bound.

The protein localises to the nucleus. In terms of biological role, component of the spliceosome A complex. Regulates alternative splicing of a number of mRNAs. May modulate splice site pairing after recruitment of the U1 and U2 snRNPs to the 5' and 3' splice sites of the intron. The sequence is that of RNA-binding protein 5-B (rbm5-b) from Xenopus laevis (African clawed frog).